The chain runs to 581 residues: Arginine--tRNA ligase (581 aa).

The short motif at 126–136 is the 'HIGH' region element; sequence PNLAKEMHVGH.

This sequence belongs to the class-I aminoacyl-tRNA synthetase family. As to quaternary structure, monomer.

The protein localises to the cytoplasm. The enzyme catalyses tRNA(Arg) + L-arginine + ATP = L-arginyl-tRNA(Arg) + AMP + diphosphate. The chain is Arginine--tRNA ligase from Shewanella baltica (strain OS155 / ATCC BAA-1091).